The following is a 113-amino-acid chain: uncharacterized protein (113 aa).

The region spanning 41 to 88 is the Cupin type-2 domain; the sequence is DWHHHPDSDELFIVLEGELLIDFKDKETAVLKANDSLLIPKGTVHRTR.

The protein belongs to the SchB/CurC family.

This is an uncharacterized protein from Bacillus subtilis (strain 168).